The chain runs to 471 residues: MKIKTRFAPSPTGYLHVGGARTALYSWLFARNHGGEFVLRIEDTDLERSTPEAIEAIMDGMNWLSLEWDEGPYYQTKRFDRYNAVIDQMLEEGTAYKCYCSKERLEALREEQMAKGEKPRYDGRCRHSHEHHADDEPCVVRFANPQEGSVVFDDQIRGPIEFSNQELDDLIIRRTDGSPTYNFCVVVDDWDMEITHVIRGEDHINNTPRQINILKALKAPVPVYAHVSMINGDDGKKLSKRHGAVSVMQYRDDGYLPEALLNYLVRLGWSHGDQEIFTREEMIKYFTLNAVSKSASAFNTDKLLWLNHHYINALPPEYVATHLQWHIEQENIDTRNGPQLADLVKLLGERCKTLKEMAQSCRYFYEDFAEFDADARKKHLRPVARQPLEVVRDKLAAITDWPAENVHHAIQATADELEVGMGKVGMPLRVAVTGAGQSPALDVTVHAIGRTRSIERINKALAFIAERENQQ.

Positions 9-19 match the 'HIGH' region motif; that stretch reads PSPTGYLHVGG. Residues C98, C100, C125, and H127 each contribute to the Zn(2+) site. Positions 237–241 match the 'KMSKS' region motif; the sequence is KLSKR. K240 provides a ligand contact to ATP.

The protein belongs to the class-I aminoacyl-tRNA synthetase family. Glutamate--tRNA ligase type 1 subfamily. Monomer. It depends on Zn(2+) as a cofactor.

The protein resides in the cytoplasm. It carries out the reaction tRNA(Glu) + L-glutamate + ATP = L-glutamyl-tRNA(Glu) + AMP + diphosphate. In terms of biological role, catalyzes the attachment of glutamate to tRNA(Glu) in a two-step reaction: glutamate is first activated by ATP to form Glu-AMP and then transferred to the acceptor end of tRNA(Glu). In Shigella boydii serotype 4 (strain Sb227), this protein is Glutamate--tRNA ligase.